The sequence spans 607 residues: Glucose-6-phosphate isomerase, glycosomal (607 aa).

The active-site Proton donor is E411. Catalysis depends on residues H442 and K571. The Microbody targeting signal motif lies at 605–607 (SHL).

This sequence belongs to the GPI family. As to quaternary structure, homodimer.

The protein localises to the glycosome. The enzyme catalyses alpha-D-glucose 6-phosphate = beta-D-fructose 6-phosphate. Its pathway is carbohydrate degradation; glycolysis; D-glyceraldehyde 3-phosphate and glycerone phosphate from D-glucose: step 2/4. In Trypanosoma brucei brucei, this protein is Glucose-6-phosphate isomerase, glycosomal (PGI).